The sequence spans 297 residues: MCAKLVEMAFGPVNADSPPLTAEEKESAVEKLVGSKPFPALKKKYHDKVPAQDPKYCLFSFVEVLPSCDIKAAGAEEMCSCCIKRRRGQVFGVACVRGTAHTLAKAKQKADKLVGDYDSVHVVQTCHVGRPFPLVSSGMAQETVAPSAMEAAEAAMDAKSAEKRKERMRQKLEMRKREQEIKARNRKLLEDPSCDPDAEEETDLERYATLRVKTTCLLENAKNASAQIKEYLASMRKSAEAVVAMEAADPTLVENYPGLIRDSRAKMGVSKQDTEAFLKMSSFDCLTAASELETMGF.

This is an uncharacterized protein from Frog virus 3 (isolate Goorha) (FV-3).